The primary structure comprises 440 residues: MKTFFQFDELGTSYRNEIIGGLTTFLSMAYILFVNPITLALESVKDFPEALRIDQGAVFTATALASAAGCILMGLIARYPIAIAPGMGLNAFFAFSVVLGMGISWQAALSGVFISGLIFVALSLTGFREKIINAIPPELKLAVGAGIGLFITFVGLQGSGIITANPSTLVTIGNIHSGPVLLTIFGVIVTVILMVLRVNAGVFIGMLLTAVAGMIFGLVPVPTQIIGSVPSLAPTFGQAWIHLPDIFSVQMLIVILTFLFVGFFDTAGTLVAVATQAGLMKENKLPRAGRALLADSSSIVIGAVLGTSTTTSYVESSSGVAAGARSGFAAIVTGILFLLATFFSPLLSVVTSNVTAPALIIVGALMVAPLGKIAWDKFEVAVPAFLTMIMMPLTYSIATGIAIGFIFYPITMVCKGKAKEVHPIMYGLFVVFILYFIFLK.

13 helical membrane-spanning segments follow: residues 18–38 (IIGG…NPIT), 57–77 (AVFT…GLIA), 81–101 (IAIA…VLGM), 107–127 (AALS…LTGF), 142–162 (AVGA…SGII), 175–195 (IHSG…ILMV), 201–221 (GVFI…LVPV), 251–271 (MLIV…GTLV), 291–311 (ALLA…STTT), 327–347 (GFAA…SPLL), 354–374 (VTAP…GKIA), 388–408 (MIMM…FIFY), and 419–439 (KEVH…FIFL).

Belongs to the nucleobase:cation symporter-2 (NCS2) (TC 2.A.40) family. Azg-like subfamily.

The protein localises to the cell membrane. In terms of biological role, involved in the uptake of the purine bases hypoxanthine and guanine. In Bacillus subtilis (strain 168), this protein is Guanine/hypoxanthine permease PbuG (pbuG).